The chain runs to 1479 residues: Type VII secretion system protein EssC (1479 aa).

The Cytoplasmic segment spans residues 1 to 229; sequence MHKLIIKYNK…RPPQPIQKNN (229 aa). A helical membrane pass occupies residues 230–252; that stretch reads TVIWRSIIPPLVMIALTVVIFLV. The Extracellular segment spans residues 253-256; the sequence is RPIG. A helical transmembrane segment spans residues 257–279; that stretch reads IYILMMIGMSTVTIVFGITTYFS. At 280–1479 the chain is on the cytoplasmic side; that stretch reads EKKKYNKDVE…QAYQKIRWFK (1200 aa). FtsK domains are found at residues 652–846 and 997–1183; these read DDIL…QDSN and QGPM…SEVS. ATP contacts are provided by residues 672 to 679 and 1014 to 1021; these read GTTGSGKS and GSPGYGRT.

This sequence belongs to the EssC family. As to quaternary structure, homooligomer. Interacts with EsaE.

It is found in the cell membrane. In terms of biological role, component of the type VII secretion system (Ess). Required for the secretion of substrates including EsxA and EsxB. However, unable to support secretion of the substrate protein EsxC. The chain is Type VII secretion system protein EssC from Staphylococcus aureus (strain Mu50 / ATCC 700699).